The primary structure comprises 136 residues: Keratin-associated protein 9-3 (136 aa).

A run of 11 repeats spans residues 3–7 (CCATS), 21–25 (CCQPT), 31–35 (CCQPS), 36–40 (CCEAS), 41–45 (CCQPS), 46–50 (CCETG), 87–91 (CCVVS), 97–101 (CCQLH), 107–111 (CCRPS), 117–121 (CCRPA), and 126–130 (CCQPS). Positions 21–130 (CCQPTCTQSS…ACCCYCCQPS (110 aa)) are 11 X 5 AA repeats of C-C-[AEQVR]-[ALPTV]-[AGHST].

Belongs to the KRTAP type 9 family. Interacts with hair keratins.

In terms of biological role, in the hair cortex, hair keratin intermediate filaments are embedded in an interfilamentous matrix, consisting of hair keratin-associated proteins (KRTAP), which are essential for the formation of a rigid and resistant hair shaft through their extensive disulfide bond cross-linking with abundant cysteine residues of hair keratins. The matrix proteins include the high-sulfur and high-glycine-tyrosine keratins. The chain is Keratin-associated protein 9-3 from Mus musculus (Mouse).